We begin with the raw amino-acid sequence, 347 residues long: S-adenosylmethionine:tRNA ribosyltransferase-isomerase (347 aa).

This sequence belongs to the QueA family. Monomer.

The protein resides in the cytoplasm. It carries out the reaction 7-aminomethyl-7-carbaguanosine(34) in tRNA + S-adenosyl-L-methionine = epoxyqueuosine(34) in tRNA + adenine + L-methionine + 2 H(+). It participates in tRNA modification; tRNA-queuosine biosynthesis. Transfers and isomerizes the ribose moiety from AdoMet to the 7-aminomethyl group of 7-deazaguanine (preQ1-tRNA) to give epoxyqueuosine (oQ-tRNA). In Bordetella pertussis (strain Tohama I / ATCC BAA-589 / NCTC 13251), this protein is S-adenosylmethionine:tRNA ribosyltransferase-isomerase.